The primary structure comprises 381 residues: L-lactate dehydrogenase (381 aa).

One can recognise an FMN hydroxy acid dehydrogenase domain in the interval 1–380 (MIISASTDYR…TRDSLVRELG (380 aa)). Residue Y24 participates in substrate binding. 2 residues coordinate FMN: S106 and Q127. Residue Y129 coordinates substrate. Position 155 (T155) interacts with FMN. R164 serves as a coordination point for substrate. K251 provides a ligand contact to FMN. H275 acts as the Proton acceptor in catalysis. Residue R278 participates in substrate binding. Residue 306 to 330 (DSGIRSGLDVVRMIALGADTVLIGR) coordinates FMN.

It belongs to the FMN-dependent alpha-hydroxy acid dehydrogenase family. As to quaternary structure, homotetramer. FMN serves as cofactor.

It is found in the cell inner membrane. The enzyme catalyses (S)-lactate + A = pyruvate + AH2. Its function is as follows. Catalyzes the conversion of L-lactate to pyruvate. Is coupled to the respiratory chain. This Pseudomonas putida (strain ATCC 700007 / DSM 6899 / JCM 31910 / BCRC 17059 / LMG 24140 / F1) protein is L-lactate dehydrogenase.